A 201-amino-acid polypeptide reads, in one-letter code: Large ribosomal subunit protein uL4 (201 aa).

A disordered region spans residues 43-71 (TRAQKTRSEVSGGGKKPWAQKGTGRARAG).

Belongs to the universal ribosomal protein uL4 family. In terms of assembly, part of the 50S ribosomal subunit.

One of the primary rRNA binding proteins, this protein initially binds near the 5'-end of the 23S rRNA. It is important during the early stages of 50S assembly. It makes multiple contacts with different domains of the 23S rRNA in the assembled 50S subunit and ribosome. In terms of biological role, forms part of the polypeptide exit tunnel. The polypeptide is Large ribosomal subunit protein uL4 (Pseudoalteromonas translucida (strain TAC 125)).